A 406-amino-acid chain; its full sequence is Argininosuccinate synthase (406 aa).

Residues 11 to 19 and alanine 38 contribute to the ATP site; that span reads AYSGGLDTS. 2 residues coordinate L-citrulline: tyrosine 91 and serine 96. Glycine 121 is an ATP binding site. Residues threonine 123, asparagine 127, and aspartate 128 each contribute to the L-aspartate site. Residue asparagine 127 coordinates L-citrulline. L-citrulline contacts are provided by arginine 131, serine 182, serine 191, glutamate 267, and tyrosine 279.

It belongs to the argininosuccinate synthase family. Type 1 subfamily. Homotetramer.

It is found in the cytoplasm. It catalyses the reaction L-citrulline + L-aspartate + ATP = 2-(N(omega)-L-arginino)succinate + AMP + diphosphate + H(+). Its pathway is amino-acid biosynthesis; L-arginine biosynthesis; L-arginine from L-ornithine and carbamoyl phosphate: step 2/3. This is Argininosuccinate synthase from Rhodospirillum centenum (strain ATCC 51521 / SW).